A 775-amino-acid polypeptide reads, in one-letter code: Melanoma-associated antigen D1 (775 aa).

The disordered stretch occupies residues 37–330 (SEAPPTSQAT…PARQTPSAWQ (294 aa)). Low complexity predominate over residues 39–50 (APPTSQATAAAS). Composition is skewed to polar residues over residues 52 to 63 (PNASPQSSQPPT), 84 to 100 (KAQN…SQAR), 107 to 120 (KNQS…QNGT), 149 to 178 (GQNS…NQPK), 221 to 235 (AQTS…NVES), 247 to 258 (VNNLNVEENNSG), and 296 to 308 (LAWQ…QNQT). A run of 19 repeats spans residues 292 to 297 (WQTPLA), 298 to 303 (WQNPSG), 304 to 309 (WQNQTA), 329 to 334 (WQNPVA), 335 to 340 (WQNPVI), 341 to 346 (WPNPVI), 347 to 352 (WQNPVI), 353 to 358 (WPNPIV), 359 to 364 (WPGPIV), 365 to 370 (WPNPMA), 371 to 376 (WQSTPG), 377 to 382 (WQSPPS), 383 to 388 (WQAPPS), 389 to 394 (WQSPQD), 395 to 400 (WQGPPD), 401 to 406 (WQVPPD), 407 to 412 (WSMPPD), 413 to 418 (WSFPSD), and 419 to 424 (WPFPPD). The tract at residues 292–441 (WQTPLAWQNP…IPPDWQNLRP (150 aa)) is 22 X 6 AA tandem repeats of W-[PQ]-X-P-X-X. The span at 309–326 (ARQTPPAARQSPPARQTP) shows a compositional bias: low complexity. The segment at 374 to 409 (TPGWQSPPSWQAPPSWQSPQDWQGPPDWQVPPDWSM) is disordered. The span at 375-406 (PGWQSPPSWQAPPSWQSPQDWQGPPDWQVPPD) shows a compositional bias: low complexity. The stretch at 425–429 (WIPAD) is one 20; approximate repeat. Repeat copies occupy residues 430-435 (WPIPPD) and 436-441 (WQNLRP). Residues 437–452 (QNLRPSPNLRSSSNSR) are compositionally biased toward low complexity. Positions 437–463 (QNLRPSPNLRSSSNSRASQNQGPPQPR) are disordered. Residues 468-666 (LQERANKLVK…RDWTAQFMEA (199 aa)) enclose the MAGE domain.

In terms of assembly, interacts with DLX5, DLX7 and MSX2 and forms homomultimers. Interacts with UNC5A. Interacts with TRIM28 and PJA1. Interacts with NGFR/p75NTR and RORA. As to expression, ubiquitously expressed in many adult tissues, except for the spleen. Expressed in osteoblastic and chondrogenic cell lines and also during embryonic development.

It is found in the nucleus. It localises to the cytoplasm. Its subcellular location is the cell membrane. Involved in the apoptotic response after nerve growth factor (NGF) binding in neuronal cells. Inhibits cell cycle progression, and facilitates NGFR-mediated apoptosis. May act as a regulator of the function of DLX family members. May enhance ubiquitin ligase activity of RING-type zinc finger-containing E3 ubiquitin-protein ligases. Proposed to act through recruitment and/or stabilization of the Ubl-conjugating enzyme (E2) at the E3:substrate complex. Plays a role in the circadian rhythm regulation. May act as RORA coregulator, modulating the expression of core clock genes such as BMAL1 and NFIL3, induced, or NR1D1, repressed. This chain is Melanoma-associated antigen D1 (Maged1), found in Mus musculus (Mouse).